The primary structure comprises 95 residues: Ragulator complex protein LAMTOR4 homolog (95 aa).

Belongs to the LAMTOR4 family. In terms of assembly, part of the Ragulator complex.

The protein localises to the lysosome. Functionally, regulator of the TOR pathway, a signaling cascade that promotes cell growth in response to growth factors, energy levels, and amino acids. As part of the Ragulator complex, may activate the TOR signaling cascade in response to amino acids. In Nematostella vectensis (Starlet sea anemone), this protein is Ragulator complex protein LAMTOR4 homolog.